The chain runs to 452 residues: Friend leukemia integration 1 transcription factor (452 aa).

Serine 39 carries the phosphoserine modification. Residues 112 to 198 enclose the PNT domain; sequence PPPPNMTTNE…SHLTYLRESS (87 aa). Positions 202–214 are enriched in polar residues; it reads YNTTSHTDPSSRL. The disordered stretch occupies residues 202–272; it reads YNTTSHTDPS…YQILGPTSSR (71 aa). A compositionally biased stretch (basic and acidic residues) spans 215 to 226; it reads NVKEDPSYDSVR. The segment covering 248–257 has biased composition (polar residues); the sequence is QTMSKNTEQR. Positions 281–361 form a DNA-binding region, ETS; sequence IQLWQFLLEL…HGKRYAYKFD (81 aa).

Belongs to the ETS family. In terms of assembly, can form homodimers or heterodimers with ETV6/TEL1.

It is found in the nucleus. Sequence-specific transcriptional activator. Recognizes the DNA sequence 5'-C[CA]GGAAGT-3'. The polypeptide is Friend leukemia integration 1 transcription factor (FLI1) (Bos taurus (Bovine)).